Consider the following 138-residue polypeptide: Ribulose bisphosphate carboxylase small subunit (138 aa).

It belongs to the RuBisCO small chain family. In terms of assembly, heterohexadecamer of 8 large and 8 small subunits.

The protein resides in the plastid. The protein localises to the chloroplast. RuBisCO catalyzes two reactions: the carboxylation of D-ribulose 1,5-bisphosphate, the primary event in carbon dioxide fixation, as well as the oxidative fragmentation of the pentose substrate in the photorespiration process. Both reactions occur simultaneously and in competition at the same active site. Although the small subunit is not catalytic it is essential for maximal activity. The protein is Ribulose bisphosphate carboxylase small subunit of Pyropia yezoensis (Susabi-nori).